Reading from the N-terminus, the 597-residue chain is uncharacterized protein (597 aa).

5 helical membrane-spanning segments follow: residues 37-57 (VLII…LWPV), 67-87 (IFWL…LQFA), 109-129 (GGER…YAAI), 134-154 (SVSL…FIAW), and 162-182 (ALMT…LAIV). Residues 393 to 597 (HQLARDLHDG…QITIFVPIES (205 aa)) enclose the Histidine kinase domain.

It localises to the cell membrane. This is an uncharacterized protein from Chloroflexus aurantiacus (strain ATCC 29366 / DSM 635 / J-10-fl).